The sequence spans 684 residues: DNA-directed RNA polymerase subunit beta' (684 aa).

Zn(2+) is bound by residues Cys-69, Cys-71, Cys-87, and Cys-90. Positions 489, 491, and 493 each coordinate Mg(2+).

It belongs to the RNA polymerase beta' chain family. RpoC1 subfamily. In plastids the minimal PEP RNA polymerase catalytic core is composed of four subunits: alpha, beta, beta', and beta''. When a (nuclear-encoded) sigma factor is associated with the core the holoenzyme is formed, which can initiate transcription. It depends on Mg(2+) as a cofactor. Zn(2+) is required as a cofactor.

It localises to the plastid. It is found in the chloroplast. The catalysed reaction is RNA(n) + a ribonucleoside 5'-triphosphate = RNA(n+1) + diphosphate. DNA-dependent RNA polymerase catalyzes the transcription of DNA into RNA using the four ribonucleoside triphosphates as substrates. The protein is DNA-directed RNA polymerase subunit beta' of Marchantia polymorpha (Common liverwort).